A 415-amino-acid polypeptide reads, in one-letter code: D-threonate kinase (415 aa).

Substrate-binding positions include aspartate 9, arginine 53, and 81–84 (KIDS). Residues serine 251, 345–348 (GGET), and glycine 392 each bind ATP.

The protein belongs to the four-carbon acid sugar kinase family.

The catalysed reaction is D-threonate + ATP = 4-O-phospho-D-threonate + ADP + H(+). Its function is as follows. Catalyzes the ATP-dependent phosphorylation of D-threonate to D-threonate 4-phosphate. Can also phosphorylate 4-hydroxy-L-threonine, with lower efficiency. The sequence is that of D-threonate kinase from Cupriavidus necator (strain ATCC 17699 / DSM 428 / KCTC 22496 / NCIMB 10442 / H16 / Stanier 337) (Ralstonia eutropha).